Reading from the N-terminus, the 151-residue chain is Ubiquitin-conjugating enzyme E2 2 (151 aa).

A disordered region spans residues 1–26; sequence MSTTARRRLMRDFKRMQQDPPQGVSA. In terms of domain architecture, UBC core spans 4–150; that stretch reads TARRRLMRDF…VRDTVEASWT (147 aa). The active-site Glycyl thioester intermediate is Cys88.

This sequence belongs to the ubiquitin-conjugating enzyme family.

It is found in the cytoplasm. The protein localises to the nucleus. The enzyme catalyses S-ubiquitinyl-[E1 ubiquitin-activating enzyme]-L-cysteine + [E2 ubiquitin-conjugating enzyme]-L-cysteine = [E1 ubiquitin-activating enzyme]-L-cysteine + S-ubiquitinyl-[E2 ubiquitin-conjugating enzyme]-L-cysteine.. It participates in protein modification; protein ubiquitination. Functionally, catalyzes the covalent attachment of ubiquitin to other proteins. Plays a role in transcription regulation by catalyzing the monoubiquitination of histone H2B to form H2BK123ub1. H2BK123ub1 gives a specific tag for epigenetic transcriptional activation and is also a prerequisite for H3K4me and H3K79me formation. Also involved in postreplication repair of UV-damaged DNA, in N-end rule-dependent protein degradation and in sporulation. This is Ubiquitin-conjugating enzyme E2 2 (UBC2) from Yarrowia lipolytica (strain CLIB 122 / E 150) (Yeast).